The sequence spans 156 residues: Large ribosomal subunit protein uL15 (156 aa).

Residues 29–48 (CGKGKTSGRGHKGQKARSGV) form a disordered region. Residues 34 to 43 (TSGRGHKGQK) show a composition bias toward basic residues.

This sequence belongs to the universal ribosomal protein uL15 family. Part of the 50S ribosomal subunit.

In terms of biological role, binds to the 23S rRNA. The protein is Large ribosomal subunit protein uL15 of Ehrlichia chaffeensis (strain ATCC CRL-10679 / Arkansas).